The chain runs to 460 residues: Acetyl-CoA decarbonylase/synthase complex subunit beta (460 aa).

Positions 188, 191, 277, and 279 each coordinate [Ni-Fe-S] cluster. A compositionally biased stretch (acidic residues) spans 402-416; sequence EETEPEEEEVEEAYP. The segment at 402 to 422 is disordered; sequence EETEPEEEEVEEAYPEETPIP.

Belongs to the CdhC family. Monomer. The ACDS complex is made up of alpha, epsilon, beta, gamma and delta chains with a probable stoichiometry of (alpha(2)epsilon(2))(4)-beta(8)-(gamma(1)delta(1))(8). [Ni-Fe-S] cluster is required as a cofactor.

The enzyme catalyses Co(I)-[corrinoid Fe-S protein] + acetyl-CoA + H(+) = methyl-Co(III)-[corrinoid Fe-S protein] + CO + CoA. Part of a complex that catalyzes the reversible cleavage of acetyl-CoA, allowing autotrophic growth from CO(2). The alpha-epsilon complex generates CO from CO(2), while the beta subunit (this protein) combines the CO with CoA and a methyl group to form acetyl-CoA. The methyl group, which is incorporated into acetyl-CoA, is transferred to the beta subunit by a corrinoid iron-sulfur protein (the gamma-delta complex). The chain is Acetyl-CoA decarbonylase/synthase complex subunit beta from Methanothermobacter thermautotrophicus (strain ATCC 29096 / DSM 1053 / JCM 10044 / NBRC 100330 / Delta H) (Methanobacterium thermoautotrophicum).